A 354-amino-acid polypeptide reads, in one-letter code: Abasic site processing protein HMCES (354 aa).

The active-site Nucleophile is the Cys-2. Cys-2 carries the thiazolidine linkage to a ring-opened DNA abasic site modification. Residue Glu-127 is part of the active site. Residues Lys-148 and Lys-151 each participate in a glycyl lysine isopeptide (Lys-Gly) (interchain with G-Cter in SUMO2) cross-link. Ser-160 is subject to Phosphoserine. Residue Lys-276 forms a Glycyl lysine isopeptide (Lys-Gly) (interchain with G-Cter in SUMO2) linkage. A disordered region spans residues 292-354 (ATKSPKKEDS…EPVAKRPYSQ (63 aa)). A Phosphoserine modification is found at Ser-295. A compositionally biased stretch (basic and acidic residues) spans 296-309 (PKKEDSKTPQKEES). Lys-306 is covalently cross-linked (Glycyl lysine isopeptide (Lys-Gly) (interchain with G-Cter in SUMO2)). Phosphoserine is present on Ser-322. Positions 332–338 (GLLEQWL) match the PIP-box motif. The span at 337–348 (WLKREKEEEPVA) shows a compositional bias: basic and acidic residues. Glycyl lysine isopeptide (Lys-Gly) (interchain with G-Cter in SUMO2) cross-links involve residues Lys-339 and Lys-342.

It belongs to the SOS response-associated peptidase family. In terms of assembly, interacts (via PIP-box motif) with PCNA. Post-translationally, ubiquitinated; the covalent HMCES DNA-protein cross-link is ubiquitinated, leading to its degradation by the proteasome.

The protein resides in the chromosome. With respect to regulation, formation and reversal of DNA-protein cross-link depends on DNA context. Catalyzes formation of the thiazolidine linkage in presence of abasic sites in single-stranded DNA. Mediates the reversal of the thiazolidine cross-link in presence of double stranded DNA. Its function is as follows. Sensor of abasic sites in single-stranded DNA (ssDNA) required to preserve genome integrity by promoting error-free repair of abasic sites. Acts as an enzyme that recognizes and binds abasic sites in ssDNA at replication forks and chemically modifies the lesion by forming a covalent cross-link with DNA: forms a stable thiazolidine linkage between a ring-opened abasic site and the alpha-amino and sulfhydryl substituents of its N-terminal catalytic cysteine residue. Promotes error-free repair by protecting abasic sites from translesion synthesis (TLS) polymerases and endonucleases that are error-prone and would generate mutations and double-strand breaks. The HMCES DNA-protein cross-link is then either reversed or degraded. HMCES is able to catalyze the reversal of its thiazolidine cross-link and cycle between a cross-link and a non-cross-linked state depending on DNA context: mediates self-reversal of the thiazolidine cross-link in double stranded DNA, allowing APEX1 to initiate downstream repair of abasic sites. The HMCES DNA-protein cross-link can also be degraded by the SPRTN metalloprotease following unfolding by the BRIP1/FANCJ helicase. Has preference for ssDNA, but can also accommodate double-stranded DNA with 3' or 5' overhang (dsDNA), and dsDNA-ssDNA 3' junction. Plays a protective role during somatic hypermutation of immunoglobulin genes in B-cells: acts via its ability to form covalent cross-links with abasic sites, thereby limiting the accumulation of deletions in somatic hypermutation target regions. Also involved in class switch recombination (CSR) in B-cells independently of the formation of a DNA-protein cross-link: acts by binding and protecting ssDNA overhangs to promote DNA double-strand break repair through the microhomology-mediated alternative-end-joining (Alt-EJ) pathway. Acts as a protease: mediates autocatalytic processing of its N-terminal methionine in order to expose the catalytic cysteine. The chain is Abasic site processing protein HMCES from Pongo abelii (Sumatran orangutan).